Consider the following 429-residue polypeptide: C4-dicarboxylate transport protein (429 aa).

8 helical membrane-spanning segments follow: residues 9–29 (VLYV…HFYP), 45–65 (LIKM…IAGM), 79–99 (LLYF…ATHI), 149–169 (GEIL…AHLG), 185–205 (VLFG…FGAM), 223–243 (LIGT…GTIA), 308–328 (IYMT…LTWM), and 356–376 (AATL…ILGI).

The protein belongs to the dicarboxylate/amino acid:cation symporter (DAACS) (TC 2.A.23) family.

It localises to the cell inner membrane. Responsible for the transport of dicarboxylates such as succinate, fumarate, and malate from the periplasm across the membrane. This Burkholderia ambifaria (strain MC40-6) protein is C4-dicarboxylate transport protein.